The primary structure comprises 393 residues: Biotin synthase, mitochondrial (393 aa).

Residues 1-20 (MSVSFTRSFPRAFIRSYGTV) constitute a mitochondrion transit peptide. The 230-residue stretch at 81-310 (SAIQMCTLMN…ATIVRLAAGR (230 aa)) folds into the Radical SAM core domain. Residues Cys96, Cys100, and Cys103 each coordinate [4Fe-4S] cluster. Cys140, Cys173, Cys233, and Arg305 together coordinate [2Fe-2S] cluster. Residues 366-393 (NAATPQQHVDSVAHESEKNPAAPAAEAL) form a disordered region.

Belongs to the radical SAM superfamily. Biotin synthase family. Requires [4Fe-4S] cluster as cofactor. The cofactor is [2Fe-2S] cluster.

The protein resides in the mitochondrion. It carries out the reaction (4R,5S)-dethiobiotin + (sulfur carrier)-SH + 2 reduced [2Fe-2S]-[ferredoxin] + 2 S-adenosyl-L-methionine = (sulfur carrier)-H + biotin + 2 5'-deoxyadenosine + 2 L-methionine + 2 oxidized [2Fe-2S]-[ferredoxin]. The protein operates within cofactor biosynthesis; biotin biosynthesis; biotin from 7,8-diaminononanoate: step 2/2. Functionally, biotin synthase; part of the cluster involved in the biosynthesis of biotin (also known as vitamin B8 or vitamin H), a water-soluble vitamin that functions as a prosthetic group of many carboxylases, such as acetyl-CoA carboxylase and pyruvate carboxylase. Catalyzes the conversion of dethiobiotin (DTB) to biotin by the insertion of a sulfur atom into dethiobiotin via a radical-based mechanism. The chain is Biotin synthase, mitochondrial from Emericella nidulans (strain FGSC A4 / ATCC 38163 / CBS 112.46 / NRRL 194 / M139) (Aspergillus nidulans).